A 255-amino-acid chain; its full sequence is Triosephosphate isomerase (255 aa).

Residue 9-11 participates in substrate binding; that stretch reads NWK. His95 acts as the Electrophile in catalysis. Glu167 functions as the Proton acceptor in the catalytic mechanism. Residues Gly173, Ser212, and 233–234 contribute to the substrate site; that span reads GG.

Belongs to the triosephosphate isomerase family. As to quaternary structure, homodimer.

The protein resides in the cytoplasm. The enzyme catalyses D-glyceraldehyde 3-phosphate = dihydroxyacetone phosphate. Its pathway is carbohydrate biosynthesis; gluconeogenesis. It participates in carbohydrate degradation; glycolysis; D-glyceraldehyde 3-phosphate from glycerone phosphate: step 1/1. Functionally, involved in the gluconeogenesis. Catalyzes stereospecifically the conversion of dihydroxyacetone phosphate (DHAP) to D-glyceraldehyde-3-phosphate (G3P). In Erwinia tasmaniensis (strain DSM 17950 / CFBP 7177 / CIP 109463 / NCPPB 4357 / Et1/99), this protein is Triosephosphate isomerase.